A 144-amino-acid chain; its full sequence is Large ribosomal subunit protein uL11 (144 aa).

Belongs to the universal ribosomal protein uL11 family. Part of the ribosomal stalk of the 50S ribosomal subunit. Interacts with L10 and the large rRNA to form the base of the stalk. L10 forms an elongated spine to which L12 dimers bind in a sequential fashion forming a multimeric L10(L12)X complex. One or more lysine residues are methylated.

Its function is as follows. Forms part of the ribosomal stalk which helps the ribosome interact with GTP-bound translation factors. This chain is Large ribosomal subunit protein uL11, found in Marinomonas sp. (strain MWYL1).